The chain runs to 152 residues: Xanthine-guanine phosphoribosyltransferase (152 aa).

Residues 37 to 38 (RG), Arg69, and 88 to 96 (DDLVDTGGT) contribute to the 5-phospho-alpha-D-ribose 1-diphosphate site. Arg69 contacts GMP. Asp89 is a Mg(2+) binding site. 2 residues coordinate guanine: Asp92 and Ile135. 2 residues coordinate xanthine: Asp92 and Ile135. Residues 92–96 (DTGGT) and 134–135 (WI) contribute to the GMP site.

The protein belongs to the purine/pyrimidine phosphoribosyltransferase family. XGPT subfamily. Homotetramer. The cofactor is Mg(2+).

It is found in the cell inner membrane. It catalyses the reaction GMP + diphosphate = guanine + 5-phospho-alpha-D-ribose 1-diphosphate. The enzyme catalyses XMP + diphosphate = xanthine + 5-phospho-alpha-D-ribose 1-diphosphate. It carries out the reaction IMP + diphosphate = hypoxanthine + 5-phospho-alpha-D-ribose 1-diphosphate. Its pathway is purine metabolism; GMP biosynthesis via salvage pathway; GMP from guanine: step 1/1. It functions in the pathway purine metabolism; XMP biosynthesis via salvage pathway; XMP from xanthine: step 1/1. In terms of biological role, purine salvage pathway enzyme that catalyzes the transfer of the ribosyl-5-phosphate group from 5-phospho-alpha-D-ribose 1-diphosphate (PRPP) to the N9 position of the 6-oxopurines guanine and xanthine to form the corresponding ribonucleotides GMP (guanosine 5'-monophosphate) and XMP (xanthosine 5'-monophosphate), with the release of PPi. To a lesser extent, also acts on hypoxanthine. This is Xanthine-guanine phosphoribosyltransferase from Pectobacterium carotovorum subsp. carotovorum (strain PC1).